The sequence spans 258 residues: D-beta-hydroxybutyrate dehydrogenase (258 aa).

Valine 6–valine 30 contacts NAD(+). Residue serine 140 coordinates substrate. Residue tyrosine 153 is the Proton acceptor of the active site.

The protein belongs to the short-chain dehydrogenases/reductases (SDR) family.

The catalysed reaction is (R)-3-hydroxybutanoate + NAD(+) = acetoacetate + NADH + H(+). The sequence is that of D-beta-hydroxybutyrate dehydrogenase (bdhA) from Rhizobium meliloti (strain 1021) (Ensifer meliloti).